Here is a 288-residue protein sequence, read N- to C-terminus: Cytochrome b-c1 complex catalytic subunit, mitochondrial (288 aa).

The helical transmembrane segment at 12-34 (SMVQKFIAGGVGVTGLTASYLLY) threads the bilayer. A Cytochrome c domain is found at 69–222 (ASIRRGFQVY…DLVEYEDGTP (154 aa)). Heme c-binding residues include Cys-82, Cys-85, and His-86. The segment covering 111-121 (EELEYDDEPDD) has biased composition (acidic residues). Residues 111–138 (EELEYDDEPDDEGKPRKRPGKLADYIPG) form a disordered region. A helical membrane pass occupies residues 250 to 268 (WGLKALVVLSSLYLLSIWV).

The protein belongs to the cytochrome c family. As to quaternary structure, component of the ubiquinol-cytochrome c oxidoreductase (cytochrome b-c1 complex, complex III, CIII), a multisubunit enzyme composed of 10 subunits. The complex is composed of 3 respiratory subunits cytochrome b (COB), cytochrome c1 (CYT1) and Rieske protein (RIP1), 2 core protein subunits COR1 and QCR2, and 5 low-molecular weight protein subunits QCR6, QCR7, QCR8, QCR9 and QCR10. The complex exists as an obligatory dimer and forms supercomplexes (SCs) in the inner mitochondrial membrane with a monomer or a dimer of cytochrome c oxidase (complex IV, CIV), resulting in 2 different assemblies (supercomplexes III(2)IV and III(2)IV(2)). It depends on heme c as a cofactor.

Its subcellular location is the mitochondrion inner membrane. It catalyses the reaction a quinol + 2 Fe(III)-[cytochrome c](out) = a quinone + 2 Fe(II)-[cytochrome c](out) + 2 H(+)(out). Component of the ubiquinol-cytochrome c oxidoreductase, a multisubunit transmembrane complex that is part of the mitochondrial electron transport chain which drives oxidative phosphorylation. The complex plays an important role in the uptake of multiple carbon sources present in different host niches. The chain is Cytochrome b-c1 complex catalytic subunit, mitochondrial from Candida albicans (strain SC5314 / ATCC MYA-2876) (Yeast).